The sequence spans 485 residues: Rop guanine nucleotide exchange factor 2 (485 aa).

A disordered region spans residues 1-36 (MENLPNHEENDDVGYHQSPGPIDPNDHSASETPVYS). In terms of domain architecture, PRONE spans 107–485 (LAVQEISEPE…YVDKTMRGEE (379 aa)).

Interacts with ARC10/ROP11. As to expression, expressed in the vascular tissues of roots, leaves, sepals, petals and siliques.

In terms of biological role, guanine-nucleotide exchange factor (GEF) that acts as an activator of Rop (Rho of plants) GTPases by promoting the exchange of GDP for GTP. The chain is Rop guanine nucleotide exchange factor 2 (ROPGEF2) from Arabidopsis thaliana (Mouse-ear cress).